The chain runs to 410 residues: Histone-lysine N-methyltransferase SUV39H2 (410 aa).

The Chromo domain occupies 47–105; sequence YEVEYLCDYKVVKDMEYYLVKWKGWPDSTNTWEPLQNLKCPLLLQQFFNDKHNYLSQVK. Residues 189–247 form the Pre-SET domain; that stretch reads FGCSCTDCFFEKCCPAEAGVLLAYNKNQQIKIPPGTPIYECNSRCQCGPDCPNRIVQKG. Residues cysteine 191, cysteine 193, cysteine 196, cysteine 201, cysteine 202, cysteine 229, cysteine 233, cysteine 235, and cysteine 239 each coordinate Zn(2+). The 124-residue stretch at 250–373 folds into the SET domain; it reads YSLCIFRTSN…AGEELTFDYQ (124 aa). Residues 261-263, tyrosine 304, and 330-331 each bind S-adenosyl-L-methionine; these read CGW and NH. A Zn(2+)-binding site is contributed by cysteine 333. 3 positions are modified to phosphoserine: serine 381, serine 384, and serine 388. The 17-residue stretch at 394-410 folds into the Post-SET domain; sequence ARTVCKCGAVTCRGYLN. Zn(2+) is bound by residues cysteine 398, cysteine 400, and cysteine 405.

This sequence belongs to the class V-like SAM-binding methyltransferase superfamily. Histone-lysine methyltransferase family. Suvar3-9 subfamily. As to quaternary structure, interacts with SMAD5. The large PER complex involved in the histone methylation is composed of at least PER2, CBX3, TRIM28, SUV39H1 and/or SUV39H2; CBX3 mediates the formation of the complex. Post-translationally, ubiquitinated by the DCX(DCAF13) E3 ubiquitin ligase complex, leading to its degradation.

It is found in the nucleus. Its subcellular location is the chromosome. It localises to the centromere. It carries out the reaction L-lysyl(9)-[histone H3] + 3 S-adenosyl-L-methionine = N(6),N(6),N(6)-trimethyl-L-lysyl(9)-[histone H3] + 3 S-adenosyl-L-homocysteine + 3 H(+). Histone methyltransferase that specifically trimethylates 'Lys-9' of histone H3 using monomethylated H3 'Lys-9' as substrate. H3 'Lys-9' trimethylation represents a specific tag for epigenetic transcriptional repression by recruiting HP1 (CBX1, CBX3 and/or CBX5) proteins to methylated histones. Mainly functions in heterochromatin regions, thereby playing a central role in the establishment of constitutive heterochromatin at pericentric and telomere regions. H3 'Lys-9' trimethylation is also required to direct DNA methylation at pericentric repeats. SUV39H1 is targeted to histone H3 via its interaction with RB1 and is involved in many processes, such as cell cycle regulation, transcriptional repression and regulation of telomere length. May participate in regulation of higher-order chromatin organization during spermatogenesis. Recruited by the large PER complex to the E-box elements of the circadian target genes such as PER2 itself or PER1, contributes to the conversion of local chromatin to a heterochromatin-like repressive state through H3 'Lys-9' trimethylation. The protein is Histone-lysine N-methyltransferase SUV39H2 (SUV39H2) of Bos taurus (Bovine).